Here is an 84-residue protein sequence, read N- to C-terminus: Small ribosomal subunit protein uS17 (84 aa).

Belongs to the universal ribosomal protein uS17 family. Part of the 30S ribosomal subunit.

Its function is as follows. One of the primary rRNA binding proteins, it binds specifically to the 5'-end of 16S ribosomal RNA. The protein is Small ribosomal subunit protein uS17 of Moorella thermoacetica (strain ATCC 39073 / JCM 9320).